The chain runs to 230 residues: Large ribosomal subunit protein uL1 (230 aa).

The protein belongs to the universal ribosomal protein uL1 family. In terms of assembly, part of the 50S ribosomal subunit.

In terms of biological role, binds directly to 23S rRNA. The L1 stalk is quite mobile in the ribosome, and is involved in E site tRNA release. Its function is as follows. Protein L1 is also a translational repressor protein, it controls the translation of the L11 operon by binding to its mRNA. In Bacillus cereus (strain B4264), this protein is Large ribosomal subunit protein uL1.